The chain runs to 525 residues: GMP synthase [glutamine-hydrolyzing] (525 aa).

Residues arginine 9 to leucine 207 enclose the Glutamine amidotransferase type-1 domain. Cysteine 86 functions as the Nucleophile in the catalytic mechanism. Catalysis depends on residues histidine 181 and glutamate 183. Residues tryptophan 208–arginine 400 enclose the GMPS ATP-PPase domain. Serine 235–serine 241 lines the ATP pocket.

Homodimer.

It carries out the reaction XMP + L-glutamine + ATP + H2O = GMP + L-glutamate + AMP + diphosphate + 2 H(+). Its pathway is purine metabolism; GMP biosynthesis; GMP from XMP (L-Gln route): step 1/1. In terms of biological role, catalyzes the synthesis of GMP from XMP. This is GMP synthase [glutamine-hydrolyzing] from Pectobacterium atrosepticum (strain SCRI 1043 / ATCC BAA-672) (Erwinia carotovora subsp. atroseptica).